Reading from the N-terminus, the 477-residue chain is 3-sulfolactaldehyde dehydrogenase (477 aa).

232 to 233 (GS) lines the NAD(+) pocket. Glu252 acts as the Proton acceptor in catalysis. Leu253 serves as a coordination point for NAD(+). The active-site Nucleophile is the Cys286. Glu380 is a binding site for NAD(+).

It belongs to the aldehyde dehydrogenase family.

It carries out the reaction (2S)-3-sulfolactaldehyde + NAD(+) + H2O = (2S)-3-sulfolactate + NADH + 2 H(+). Functionally, part of the sulfo-TAL (or sulfo-SFT) pathway, a D-sulfoquinovose degradation pathway that produces sulfolactate (SL). Catalyzes the oxidation of 3-sulfolactaldehyde (SLA) to sulfolactate (SL). The protein is 3-sulfolactaldehyde dehydrogenase of Priestia aryabhattai (Bacillus aryabhattai).